Here is a 555-residue protein sequence, read N- to C-terminus: CTP synthase (555 aa).

The amidoligase domain stretch occupies residues 1-271 (MVKRGKKTKY…DDKLAELFNI (271 aa)). A CTP-binding site is contributed by S19. S19 is a binding site for UTP. Residues 20–25 (SLGKGL) and D77 contribute to the ATP site. Residues D77 and E145 each contribute to the Mg(2+) site. CTP contacts are provided by residues 152–154 (DIE), 192–197 (KTKPTQ), and K228. Residues 192–197 (KTKPTQ) and K228 contribute to the UTP site. Residues 297 to 537 (RIGIVGKYVE…VKAALEHRDA (241 aa)) form the Glutamine amidotransferase type-1 domain. G358 is an L-glutamine binding site. The Nucleophile; for glutamine hydrolysis role is filled by C385. L-glutamine contacts are provided by residues 386–389 (LGLQ), E409, and R466. Catalysis depends on residues H510 and E512. A disordered region spans residues 535–555 (RDAQQRQPPAEVKKLAVGKNG).

The protein belongs to the CTP synthase family. As to quaternary structure, homotetramer.

The catalysed reaction is UTP + L-glutamine + ATP + H2O = CTP + L-glutamate + ADP + phosphate + 2 H(+). It catalyses the reaction L-glutamine + H2O = L-glutamate + NH4(+). It carries out the reaction UTP + NH4(+) + ATP = CTP + ADP + phosphate + 2 H(+). It participates in pyrimidine metabolism; CTP biosynthesis via de novo pathway; CTP from UDP: step 2/2. With respect to regulation, allosterically activated by GTP, when glutamine is the substrate; GTP has no effect on the reaction when ammonia is the substrate. The allosteric effector GTP functions by stabilizing the protein conformation that binds the tetrahedral intermediate(s) formed during glutamine hydrolysis. Inhibited by the product CTP, via allosteric rather than competitive inhibition. In terms of biological role, catalyzes the ATP-dependent amination of UTP to CTP with either L-glutamine or ammonia as the source of nitrogen. Regulates intracellular CTP levels through interactions with the four ribonucleotide triphosphates. This Anaeromyxobacter sp. (strain K) protein is CTP synthase.